A 34-amino-acid chain; its full sequence is Mu-theraphotoxin-Pspp1 (34 aa).

Cystine bridges form between C2/C17, C9/C22, and C16/C29. F34 carries the phenylalanine amide modification.

Belongs to the neurotoxin 10 (Hwtx-1) family. In terms of tissue distribution, expressed by the venom gland.

The protein localises to the secreted. Its function is as follows. Voltage-gated sodium channel inhibitor. It is unclear if it selectively inhibits Nav1.7/SCN9A or shows similar potency on all sodium channels tested. According to Escoubas et al., 2006 and Nicolas et al., 2019, it is selective over Nav1.7/SCN9A (90% inhibition at 1 uM), versus Nav1.4 and Nav1.6 (35% inhibition), and shows a small inhibition on all other sodium channels (except Nav1.8/SCN10A). According to Goncalves et al., 2019, it shows a similar inhibition on almost all sodium channels tested (Nav1.1/SCN1A (IC(50)=280.3 nM), Nav1.2/SCN2A (IC(50)=73.7 nM), Nav1.3/SCN3A (IC(50)=201.5 nM), Nav1.4/SCN4A (IC(50)&gt;2100 nM), Nav1.5/SCN5A (IC(50)=710.6 nM), Nav1.6/SCN8A (IC(50)=491.2 nM), and Nav1.7/SCN9A (IC(50)=254.3-260 nM)), except Nav1.8/SCN10A. The voltage-dependence of steady-state Nav1.7/SCN9A channel activation and inactivation are not affected, suggesting that is does not act as a gating-modifier toxin but rather blocks or impedes ion flux through the channel pore. The toxin effect is partial and poorly reversible. In addition to its inhibition to sodium channels, it also shows a small inhibition on rat Kv3.4/KCNC4 potassium channels (20% inhibition at 1 uM). In vivo, when tested on pain models, it shows analgesic activity. The chain is Mu-theraphotoxin-Pspp1 from Phlogiellus sp. (Tarantula).